Reading from the N-terminus, the 353-residue chain is Deoxyhypusine synthase (353 aa).

NAD(+) is bound by residues 90–94, 116–118, Glu-122, and Asp-228; these read SNLIS and TAG. Residue 121-122 coordinates spermidine; that stretch reads EE. Asp-233 is a binding site for spermidine. Residue Gly-275 participates in NAD(+) binding. Residue His-280 coordinates spermidine. Residue 300-301 participates in NAD(+) binding; it reads TA. Spermidine-binding positions include 306-308 and 315-321; these read GSD and EAVSWGK. Lys-321 acts as the Nucleophile in catalysis. An NAD(+)-binding site is contributed by 334-335; sequence EA.

The protein belongs to the deoxyhypusine synthase family. Homotetramer. Requires NAD(+) as cofactor.

It carries out the reaction [eIF5A protein]-L-lysine + spermidine = [eIF5A protein]-deoxyhypusine + propane-1,3-diamine. The protein operates within protein modification; eIF5A hypusination. In terms of biological role, catalyzes the NAD-dependent oxidative cleavage of spermidine and the subsequent transfer of the butylamine moiety of spermidine to the epsilon-amino group of a specific lysine residue of the eIF-5A precursor protein to form the intermediate deoxyhypusine residue. The polypeptide is Deoxyhypusine synthase (dys-1) (Neurospora crassa (strain ATCC 24698 / 74-OR23-1A / CBS 708.71 / DSM 1257 / FGSC 987)).